Consider the following 365-residue polypeptide: DNA replication and repair protein RecF (365 aa).

30-37 serves as a coordination point for ATP; the sequence is GDNGEGKT.

This sequence belongs to the RecF family.

It localises to the cytoplasm. Functionally, the RecF protein is involved in DNA metabolism; it is required for DNA replication and normal SOS inducibility. RecF binds preferentially to single-stranded, linear DNA. It also seems to bind ATP. This Leptospira borgpetersenii serovar Hardjo-bovis (strain JB197) protein is DNA replication and repair protein RecF.